The sequence spans 775 residues: Dipeptidyl peptidase 4 (775 aa).

A signal peptide spans 1–15 (MKFLSLLLLVGVAQA). N-linked (GlcNAc...) asparagine glycans are attached at residues N81, N111, and N219. Catalysis depends on charge relay system residues S613, D690, and H725. The N-linked (GlcNAc...) asparagine glycan is linked to N731.

Belongs to the peptidase S9B family.

It is found in the secreted. The catalysed reaction is Release of an N-terminal dipeptide, Xaa-Yaa-|-Zaa-, from a polypeptide, preferentially when Yaa is Pro, provided Zaa is neither Pro nor hydroxyproline.. In terms of biological role, extracellular dipeptidyl-peptidase which removes N-terminal dipeptides sequentially from polypeptides having unsubstituted N-termini provided that the penultimate residue is proline. Contributes to pathogenicity. The protein is Dipeptidyl peptidase 4 (DPP4) of Arthroderma otae (strain ATCC MYA-4605 / CBS 113480) (Microsporum canis).